Reading from the N-terminus, the 438-residue chain is Dol-P-Man:Man(5)GlcNAc(2)-PP-Dol alpha-1,3-mannosyltransferase (438 aa).

Ser-13 is modified (phosphoserine). The next 11 membrane-spanning stretches (helical) occupy residues 41–61, 95–115, 123–143, 149–169, 172–192, 203–223, 231–251, 289–309, 332–352, 356–376, and 407–427; these read YTLL…FWVI, TGPL…YYAT, MAQN…FLIY, VPPF…SIFV, LFND…LLAQ, LAVS…FLLL, ALPK…PFLL, FHLA…LCRW, PLTP…GICF, LHYQ…WAMP, and AALH…PQPF.

Belongs to the glycosyltransferase ALG3 family.

It is found in the endoplasmic reticulum membrane. The catalysed reaction is an alpha-D-Man-(1-&gt;2)-alpha-D-Man-(1-&gt;2)-alpha-D-Man-(1-&gt;3)-[alpha-D-Man-(1-&gt;6)]-beta-D-Man-(1-&gt;4)-beta-D-GlcNAc-(1-&gt;4)-alpha-D-GlcNAc-diphospho-di-trans,poly-cis-dolichol + a di-trans,poly-cis-dolichyl beta-D-mannosyl phosphate = an alpha-D-Man-(1-&gt;2)-alpha-D-Man-(1-&gt;2)-alpha-D-Man-(1-&gt;3)-[alpha-D-Man-(1-&gt;3)-alpha-D-Man-(1-&gt;6)]-beta-D-Man-(1-&gt;4)-beta-D-GlcNAc-(1-&gt;4)-alpha-D-GlcNAc-diphospho-di-trans,poly-cis-dolichol + a di-trans,poly-cis-dolichyl phosphate + H(+). The protein operates within protein modification; protein glycosylation. Functionally, dol-P-Man:Man(5)GlcNAc(2)-PP-Dol alpha-1,3-mannosyltransferase that operates in the biosynthetic pathway of dolichol-linked oligosaccharides, the glycan precursors employed in protein asparagine (N)-glycosylation. The assembly of dolichol-linked oligosaccharides begins on the cytosolic side of the endoplasmic reticulum membrane and finishes in its lumen. The sequential addition of sugars to dolichol pyrophosphate produces dolichol-linked oligosaccharides containing fourteen sugars, including two GlcNAcs, nine mannoses and three glucoses. Once assembled, the oligosaccharide is transferred from the lipid to nascent proteins by oligosaccharyltransferases. In the lumen of the endoplasmic reticulum, adds the first dolichyl beta-D-mannosyl phosphate derived mannose in an alpha-1,3 linkage to Man(5)GlcNAc(2)-PP-dolichol to produce Man(6)GlcNAc(2)-PP-dolichol. Man(6)GlcNAc(2)-PP-dolichol is a substrate for ALG9, the following enzyme in the biosynthetic pathway. The polypeptide is Dol-P-Man:Man(5)GlcNAc(2)-PP-Dol alpha-1,3-mannosyltransferase (Homo sapiens (Human)).